We begin with the raw amino-acid sequence, 359 residues long: tRNA-specific 2-thiouridylase MnmA (359 aa).

Residues 7–14 (AMSGGVDS) and Met33 contribute to the ATP site. Residue Cys101 is the Nucleophile of the active site. Cysteines 101 and 198 form a disulfide. Gly125 lines the ATP pocket. Positions 148–150 (KDQ) are interaction with tRNA. The Cysteine persulfide intermediate role is filled by Cys198.

This sequence belongs to the MnmA/TRMU family.

It localises to the cytoplasm. It catalyses the reaction S-sulfanyl-L-cysteinyl-[protein] + uridine(34) in tRNA + AH2 + ATP = 2-thiouridine(34) in tRNA + L-cysteinyl-[protein] + A + AMP + diphosphate + H(+). Its function is as follows. Catalyzes the 2-thiolation of uridine at the wobble position (U34) of tRNA, leading to the formation of s(2)U34. In Chloroflexus aurantiacus (strain ATCC 29366 / DSM 635 / J-10-fl), this protein is tRNA-specific 2-thiouridylase MnmA.